A 362-amino-acid chain; its full sequence is Heme A synthase (362 aa).

5 consecutive transmembrane segments (helical) span residues 15-35 (VRIWLTLVAMLIAVMVLVGGA), 104-124 (VIGIAYLLPLLWFLWRGAIAP), 129-149 (ALWAIFALGALQGAVGWWMVA), 161-181 (VRLAIHLTLALVIYAAIVWTL), and 200-220 (AIALLALTLVQLFLGALVAGL). His-264 is a heme binding site. 3 helical membrane-spanning segments follow: residues 266-285 (MMAYALWALAAWHAIDALRA), 293-313 (GALWLFAALSLQAVLGILTLL), and 316-336 (VPIGLALAHQAVGIVVLTLAV). His-324 contacts heme.

The protein belongs to the COX15/CtaA family. Type 2 subfamily. In terms of assembly, interacts with CtaB. Requires heme b as cofactor.

It is found in the cell membrane. It catalyses the reaction Fe(II)-heme o + 2 A + H2O = Fe(II)-heme a + 2 AH2. Its pathway is porphyrin-containing compound metabolism; heme A biosynthesis; heme A from heme O: step 1/1. Its function is as follows. Catalyzes the conversion of heme O to heme A by two successive hydroxylations of the methyl group at C8. The first hydroxylation forms heme I, the second hydroxylation results in an unstable dihydroxymethyl group, which spontaneously dehydrates, resulting in the formyl group of heme A. The protein is Heme A synthase of Rhodopseudomonas palustris (strain BisB5).